The chain runs to 207 residues: MRVGSRKLRRDEKGFTGLEAAIVLIAFVVVAAVFSYVMLGAGFYTTQKSKKVVDTGVKQASSSLTLDGQYIYLNCTSAANGQTGSSGKVGQVYFYVTQTAGGSPVDLNMTSIAITTDTGFKQLFFNDSCTPGTDCPWWYDDTVGDGDNVVEPNEKYKITIDVNNTEWSGIGELNPNDVVTIEVRPPIGAPLTITKTLPPSFTNLTFV.

The propeptide occupies 1–14; the sequence is MRVGSRKLRRDEKG.

It belongs to the archaeal flagellin family.

The protein resides in the archaeal flagellum. In terms of biological role, flagellin is the subunit protein which polymerizes to form the filaments of archaeal flagella. The protein is Probable flagellin 2 (flaB2) of Archaeoglobus fulgidus (strain ATCC 49558 / DSM 4304 / JCM 9628 / NBRC 100126 / VC-16).